A 309-amino-acid polypeptide reads, in one-letter code: Taste receptor type 2 member 8 (309 aa).

The Extracellular portion of the chain corresponds to 1–7; sequence MFSPADN. A helical membrane pass occupies residues 8–28; sequence IFIILITGEFILGILGNGYIA. At 29–50 the chain is on the cytoplasmic side; the sequence is LVNWIDWIKKKKISTIDYILTN. A helical transmembrane segment spans residues 51 to 71; the sequence is LVISRICLISVMVVNGIVIAV. Residues 72-82 lie on the Extracellular side of the membrane; it reads YPDVYTKSKLQ. A helical membrane pass occupies residues 83 to 103; sequence IAICTFWTFANYLNMWITTCL. The Cytoplasmic segment spans residues 104-131; that stretch reads NVFYFLKIANSSHPLFLWLKQKIDMVVR. The chain crosses the membrane as a helical span at residues 132–152; that stretch reads WILLGCFAISLLVSLIAAIVL. Over 153–184 the chain is Extracellular; it reads SYDYRFHAIAKHKRNITEMFHVSKRPYFEPLT. Asn167 carries N-linked (GlcNAc...) asparagine glycosylation. A helical transmembrane segment spans residues 185–205; the sequence is LFNLFAIVPFIVSLISFFLLV. Residues 206-239 lie on the Cytoplasmic side of the membrane; it reads RSLWRHTKQIKLYATGGRDPSTEVHVRAIKTMTS. A helical transmembrane segment spans residues 240–260; it reads FIFLFFLYYISSILVTFSYLM. The Extracellular segment spans residues 261–266; it reads TKYKLA. A helical membrane pass occupies residues 267-287; it reads VEFGEIVAILYPLGHSLILIV. At 288 to 309 the chain is on the cytoplasmic side; that stretch reads LNNKLRQTFVRMLTCRKIACVI.

This sequence belongs to the G-protein coupled receptor T2R family.

It is found in the membrane. Its function is as follows. Receptor that may play a role in the perception of bitterness and is gustducin-linked. May play a role in sensing the chemical composition of the gastrointestinal content. The activity of this receptor may stimulate alpha gustducin, mediate PLC-beta-2 activation and lead to the gating of TRPM5. The chain is Taste receptor type 2 member 8 (TAS2R8) from Gorilla gorilla gorilla (Western lowland gorilla).